Consider the following 436-residue polypeptide: WD repeat domain phosphoinositide-interacting protein 2 (436 aa).

Residues 182–222 (AHDSPLAALAFDASGTKLATASEKGTVIRVFSIPEGQKLFE) form a WD 1 repeat. The L/FRRG motif motif lies at 223–226 (FRRG). WD repeat units follow at residues 228–267 (KRCV…EKPQ) and 311–349 (GHKN…GGEC).

This sequence belongs to the WD repeat PROPPIN family.

Its subcellular location is the preautophagosomal structure membrane. In terms of biological role, component of the autophagy machinery that controls the major intracellular degradation process by which cytoplasmic materials are packaged into autophagosomes and delivered to lysosomes for degradation. Involved in an early step of the formation of preautophagosomal structures. The protein is WD repeat domain phosphoinositide-interacting protein 2 (WIPI2) of Gallus gallus (Chicken).